We begin with the raw amino-acid sequence, 1259 residues long: Translocation and assembly module subunit TamB (1259 aa).

The residue at position 1 (Met1) is an N-formylmethionine. At 1–6 (MSLWKK) the chain is on the cytoplasmic side. The helical; Signal-anchor for type II membrane protein transmembrane segment at 7–27 (ISLGVVIVILLLLGSVAFLVG) threads the bilayer. Over 28-1259 (TTSGLHLVFK…ALDLLYQFEF (1232 aa)) the chain is Periplasmic.

Belongs to the TamB family. Interacts with TamA to form the translocation and assembly module (TAM).

It localises to the cell inner membrane. In terms of biological role, component of the translocation and assembly module (TAM), which facilitates the insertion and assembly of specific beta-barrel proteins into the outer membrane. Promotes the assembly and secretion across the outer membrane of a subset of autotransporters, such as Ag43. Involved in the assembly of the outer membrane usher protein FimD. In vitro, when TAM is reconstituted into preformed liposomes, it can promote the assembly of several outer membrane proteins, including OmpA, EspP, Ag43 and FadL. TamA is sufficient to catalyze a low level of outer membrane protein (OMP) assembly, but both TamA and TamB are required for efficient OMP assembly. TamB may regulate TamA activity. It could regulate conformational changes in TamA to drive its function in OMP assembly. It could also act as a chaperone that facilitate the transport of nascent membrane proteins across the periplasm to TamA in the outer membrane. Its function is as follows. In addition, is involved in outer membrane lipid homeostasis. Likely transports phospholipids between the inner membrane and the outer membrane. It would provide a bridge-like structure that protects phospholipids as they travel across the periplasm. One possible explanation for the apparent dual function of TAM is that TamB is a somewhat generic transporter of hydrophobic molecules. Functionally, tamB, YdbH and YhdP are redundant, but not equivalent, in performing an essential function for growth and maintaining lipid homeostasis in the outer membrane. The transport functions of TamB and YhdP could be differentiated according to the fatty acid saturation state of the phospholipids, with TamB transporting more unsaturated phospholipids and YhdP more saturated phospholipids. Any of these three proteins is sufficient for growth. The polypeptide is Translocation and assembly module subunit TamB (Escherichia coli (strain K12)).